A 700-amino-acid chain; its full sequence is DNA topoisomerase 1 (700 aa).

The region spanning 3–114 (KNLIIVESPA…TLPRIVFHEI (112 aa)) is the Toprim domain. Mg(2+) contacts are provided by Glu-9 and Asp-83. The 424-residue stretch at 130-553 (NMHSVNAQQT…EFYYPFMRKI (424 aa)) folds into the Topo IA-type catalytic domain. The segment at 164–169 (SAGRVQ) is interaction with DNA. Tyr-298 acts as the O-(5'-phospho-DNA)-tyrosine intermediate in catalysis. 3 C4-type zinc fingers span residues 573–599 (CPDCGGELAIRKGRFGEFVACLNFPKC), 629–656 (CPSCQKGEIVERFSKRGKFYGCSAYPKC), and 669–692 (CEECGETLVIKELKKGTFLECLKC).

The protein belongs to the type IA topoisomerase family. Monomer. Mg(2+) is required as a cofactor.

It carries out the reaction ATP-independent breakage of single-stranded DNA, followed by passage and rejoining.. Functionally, releases the supercoiling and torsional tension of DNA, which is introduced during the DNA replication and transcription, by transiently cleaving and rejoining one strand of the DNA duplex. Introduces a single-strand break via transesterification at a target site in duplex DNA. The scissile phosphodiester is attacked by the catalytic tyrosine of the enzyme, resulting in the formation of a DNA-(5'-phosphotyrosyl)-enzyme intermediate and the expulsion of a 3'-OH DNA strand. The free DNA strand then undergoes passage around the unbroken strand, thus removing DNA supercoils. Finally, in the religation step, the DNA 3'-OH attacks the covalent intermediate to expel the active-site tyrosine and restore the DNA phosphodiester backbone. The polypeptide is DNA topoisomerase 1 (Campylobacter jejuni subsp. jejuni serotype O:2 (strain ATCC 700819 / NCTC 11168)).